The following is a 425-amino-acid chain: RNA polymerase sigma factor SigA (425 aa).

The interval 193–263 (MVQSNLRLVV…TRAIADQSRT (71 aa)) is sigma-70 factor domain-2. The Interaction with polymerase core subunit RpoC signature appears at 217-220 (DLIQ). The segment at 272–347 (ETISRIKKTT…EADGETPEDE (76 aa)) is sigma-70 factor domain-3. The interval 360-413 (VLDTLSPRERDVLRLRYGLDDGRMKTLEEIGQIFNVTRERIRQIEAKALRKLRH) is sigma-70 factor domain-4. Residues 386–405 (LEEIGQIFNVTRERIRQIEA) constitute a DNA-binding region (H-T-H motif).

Belongs to the sigma-70 factor family. RpoD/SigA subfamily. As to quaternary structure, interacts transiently with the RNA polymerase catalytic core.

Its subcellular location is the cytoplasm. Functionally, sigma factors are initiation factors that promote the attachment of RNA polymerase to specific initiation sites and are then released. This sigma factor is the primary sigma factor during exponential growth. This Synechocystis sp. (strain ATCC 27184 / PCC 6803 / Kazusa) protein is RNA polymerase sigma factor SigA.